A 233-amino-acid polypeptide reads, in one-letter code: Peptidyl-tRNA hydrolase (233 aa).

Residue Tyr-14 coordinates tRNA. Catalysis depends on His-19, which acts as the Proton acceptor. Residues Phe-64, Asn-66, and Asn-112 each coordinate tRNA. The disordered stretch occupies residues 187 to 233 (VSPRRSGTGQKGKDKPPAPAKQQATATKAEPEPDTRSALQKLMERFK).

This sequence belongs to the PTH family. Monomer.

The protein resides in the cytoplasm. It catalyses the reaction an N-acyl-L-alpha-aminoacyl-tRNA + H2O = an N-acyl-L-amino acid + a tRNA + H(+). Its function is as follows. Hydrolyzes ribosome-free peptidyl-tRNAs (with 1 or more amino acids incorporated), which drop off the ribosome during protein synthesis, or as a result of ribosome stalling. In terms of biological role, catalyzes the release of premature peptidyl moieties from peptidyl-tRNA molecules trapped in stalled 50S ribosomal subunits, and thus maintains levels of free tRNAs and 50S ribosomes. This Roseobacter denitrificans (strain ATCC 33942 / OCh 114) (Erythrobacter sp. (strain OCh 114)) protein is Peptidyl-tRNA hydrolase.